The chain runs to 620 residues: Notoamide biosynthesis transcriptional activator notL' (620 aa).

The interval 1-26 (MPPSSKSRRLPPAASDSAASDAQKRR) is disordered. A DNA-binding region (zn(2)-C6 fungal-type) is located at residues 33 to 59 (CSACKARKLKCTGAPPCANCVKSRIEC). The disordered stretch occupies residues 591–620 (ETGAFFLDPDQPSGNSTPIKSETPEGTAIS).

Its subcellular location is the nucleus. Its function is as follows. Transcription factor that probably regulates the expression of the gene cluster that mediates the biosynthesis of notoamide, a fungal indole alkaloid that belongs to a family of natural products containing a characteristic bicyclo[2.2.2]diazaoctane core. The chain is Notoamide biosynthesis transcriptional activator notL' from Aspergillus versicolor.